A 76-amino-acid polypeptide reads, in one-letter code: Glutathione S-transferase (76 aa).

Residues Xaa1 to Leu40 enclose the GST N-terminal domain. Positions Leu41–Val76 constitute a GST C-terminal domain.

It belongs to the GST superfamily. Theta family.

The protein resides in the cytoplasm. It carries out the reaction RX + glutathione = an S-substituted glutathione + a halide anion + H(+). Conjugation of reduced glutathione to a wide number of exogenous and endogenous hydrophobic electrophiles. The chain is Glutathione S-transferase from Brassica oleracea var. italica (Broccoli).